Reading from the N-terminus, the 250-residue chain is 5'-nucleotidase SurE (250 aa).

The a divalent metal cation site is built by Asp8, Asp9, Ser39, and Asn95.

The protein belongs to the SurE nucleotidase family. A divalent metal cation serves as cofactor.

The protein resides in the cytoplasm. The enzyme catalyses a ribonucleoside 5'-phosphate + H2O = a ribonucleoside + phosphate. Nucleotidase that shows phosphatase activity on nucleoside 5'-monophosphates. In Cupriavidus taiwanensis (strain DSM 17343 / BCRC 17206 / CCUG 44338 / CIP 107171 / LMG 19424 / R1) (Ralstonia taiwanensis (strain LMG 19424)), this protein is 5'-nucleotidase SurE.